Reading from the N-terminus, the 363-residue chain is Peptide chain release factor 1 (363 aa).

Q237 carries the post-translational modification N5-methylglutamine. The disordered stretch occupies residues 281-302; it reads QQAEDEKSHAEEQTIRRSLVAS. A compositionally biased stretch (basic and acidic residues) spans 282–295; it reads QAEDEKSHAEEQTI.

This sequence belongs to the prokaryotic/mitochondrial release factor family. In terms of processing, methylated by PrmC. Methylation increases the termination efficiency of RF1.

Its subcellular location is the cytoplasm. Functionally, peptide chain release factor 1 directs the termination of translation in response to the peptide chain termination codons UAG and UAA. This chain is Peptide chain release factor 1, found in Psychromonas ingrahamii (strain DSM 17664 / CCUG 51855 / 37).